The primary structure comprises 411 residues: Acetylornithine aminotransferase, mitochondrial (411 aa).

At Lys262 the chain carries N6-(pyridoxal phosphate)lysine.

Belongs to the class-III pyridoxal-phosphate-dependent aminotransferase family. The cofactor is pyridoxal 5'-phosphate.

It localises to the mitochondrion matrix. It carries out the reaction N(2)-acetyl-L-ornithine + 2-oxoglutarate = N-acetyl-L-glutamate 5-semialdehyde + L-glutamate. It functions in the pathway amino-acid biosynthesis; L-arginine biosynthesis; N(2)-acetyl-L-ornithine from L-glutamate: step 4/4. The sequence is that of Acetylornithine aminotransferase, mitochondrial (ARG8) from Yarrowia lipolytica (strain CLIB 122 / E 150) (Yeast).